The primary structure comprises 872 residues: UPF0182 protein Noc_0961 (872 aa).

A run of 7 helical transmembrane segments spans residues 8–28 (FLILGLSIVVLAVFLLIAGFE), 56–76 (LVVFIQVSIVFFLIFFVNFWV), 109–129 (SLWIYTPLSLVLSIIIAWPLF), 159–179 (LFSFPIYVLILQRLLISFLLL), 207–227 (WHLSILVLMVFFIEIWDFFLQ), 254–274 (PFIWLSMFFLLGIAFFLLLFI), and 282–302 (TLAVFSLLFILSLGARHFHFL).

Belongs to the UPF0182 family.

Its subcellular location is the cell membrane. The protein is UPF0182 protein Noc_0961 of Nitrosococcus oceani (strain ATCC 19707 / BCRC 17464 / JCM 30415 / NCIMB 11848 / C-107).